Here is a 2159-residue protein sequence, read N- to C-terminus: Calpain-type cysteine protease DEK1 (2159 aa).

The first 33 residues, 1-33 (MEGEGHHGVVLACSICGFLFAVLSPFSFWVLWA), serve as a signal peptide directing secretion. Over 34-70 (VNWRPWRLYSWIYARKWPTYVQGPQLSTLCSLLTLCA) the chain is Extracellular. The chain crosses the membrane as a helical span at residues 71-91 (WLVVISPIAVLLVWGSVLIAL). Residues 92 to 95 (MERN) are Cytoplasmic-facing. A helical transmembrane segment spans residues 96-116 (IIGLAVIMAGVALLLSFYSIM). Topologically, residues 117 to 127 (LWWRTQWQSSE) are extracellular. The helical transmembrane segment at 128 to 148 (AVAYLLLLAVCLLCAYDFCAI) threads the bilayer. At 149-164 (YVTAGASASELNSPSG) the chain is on the cytoplasmic side. A helical membrane pass occupies residues 165–185 (FFFGVSVISLAINMLFICKIL). Residues 186–236 (FNVSGFDVDEYVRRSYKFAYSDCVEVAPVSCSPEPPDPSELYMTKSSRVKH) are Extracellular-facing. Residues 237–257 (LGLLYISSLLVLVGYSILYGL) form a helical membrane-spanning segment. The Cytoplasmic segment spans residues 258-264 (TSKEARW). Residues 265 to 285 (LGALTSVAVVILDWNLGLCSF) traverse the membrane as a helical segment. Over 286-294 (RFELLKSRM) the chain is Extracellular. The chain crosses the membrane as a helical span at residues 295–315 (IVLFVAGTSRAFLVSFGVHYW). Over 316–320 (YLGHC) the chain is Cytoplasmic. A helical transmembrane segment spans residues 321–341 (ISYAFVASVLLSAAVSSWLSI). Residues 342–623 (SNPSVARIDA…LIFHHLAGSP (282 aa)) lie on the Extracellular side of the membrane. The tract at residues 365–409 (RKGQNSSSNSSEGCGSSVKRSSGSVEAGQNGNAMDSMYRSNSQSD) is disordered. Residues 369 to 381 (NSSSNSSEGCGSS) show a composition bias toward low complexity. The segment covering 382–409 (VKRSSGSVEAGQNGNAMDSMYRSNSQSD) has biased composition (polar residues). Residues 624-644 (IRAFIVFTVMFIIETATVAIY) form a helical membrane-spanning segment. At 645–660 (RPETIKVINATHEQFE) the chain is on the cytoplasmic side. The helical transmembrane segment at 661–681 (FGFSILLLSPVVCSIMAFIWS) threads the bilayer. Topologically, residues 682–694 (LRAEEMLMTSKPQ) are extracellular. A helical membrane pass occupies residues 695-715 (KYGFIAWLLSTCVGLFLSFLS). Residues 716 to 719 (KSSV) lie on the Cytoplasmic side of the membrane. Residues 720-740 (ILGLSLTVPLMVACLSFAVPI) traverse the membrane as a helical segment. At 741 to 770 (WIRNGYSFWIPGREFANRENVSQAPGEKER) the chain is on the extracellular side. Residues 771–791 (ALFVITIAVFTASIIGLGAIV) traverse the membrane as a helical segment. At 792–822 (SAKPLDALGYKGWDADKNSSYSPYATSMYLG) the chain is on the cytoplasmic side. Residues 823 to 843 (WALSSTIAVITTGLIPIVAWF) form a helical membrane-spanning segment. At 844 to 853 (ATYRFSPSSA) the chain is on the extracellular side. The chain crosses the membrane as a helical span at residues 854–874 (ICVGLFATVLVSFCGASYWGV). At 875–887 (VNSREDGVPLKAD) the chain is on the cytoplasmic side. Residues 888–908 (FLAALLPLLCIPAFFSLFTGL) traverse the membrane as a helical segment. Over 909 to 921 (YKWKDDDWKISRG) the chain is Extracellular. A helical membrane pass occupies residues 922–942 (VYLFVGMGMLLLFGAVAAVIV). Residues 943 to 946 (TIRP) are Cytoplasmic-facing. A helical membrane pass occupies residues 947–967 (WTVGVACLVAILFLVFVIGVI). Topologically, residues 968-981 (HYWTSNNFYLTRTQ) are extracellular. The helical transmembrane segment at 982 to 1002 (MLLVCSIAFLLALAAFLMGLF) threads the bilayer. The Cytoplasmic portion of the chain corresponds to 1003-1016 (HGKPFVGASIGYFS). A helical membrane pass occupies residues 1017-1037 (FIFLLTGRALTVLLSPPIVVY). Residues 1038 to 1060 (SPRVLPVYVYDAHADSAKNVSYA) are Extracellular-facing. A helical membrane pass occupies residues 1061 to 1081 (FLILYGIALATEVWGVIASLI). At 1082-2159 (MNPPFVGAGV…SKASIRLEAV (1078 aa)) the chain is on the cytoplasmic side. S1371 and S1376 each carry phosphoserine. A Calpain catalytic 1 domain is found at 1417–1609 (TGRHCGELDL…MSPAEYGFFD (193 aa)). S1665 bears the Phosphoserine mark. In terms of domain architecture, Calpain catalytic 2 spans 1703–2005 (NFTDQEFPPE…FRSIYVCRVY (303 aa)). Active-site residues include C1769, H1927, and N1947.

Belongs to the peptidase C2 family. Autocatalytic proteolytic cleavage leading to the production of mainly cytoplasmic localized subproducts of about 85 and 120 kDa. As to expression, expressed in most tissues at low levels ranging from 30 to 55 ppm. Present in all endosperm cells at transcript level, but confined to aleurones at protein level.

It is found in the endoplasmic reticulum membrane. Its subcellular location is the cytoplasm. The protein resides in the cell membrane. The protein localises to the endosome membrane. In terms of biological role, essential protease involved in epiderm development. Required for aleurone cell development in the endosperm probably by maintaining and restricting the aleurone and embryonic epidermal L1 cell-layer fates as well as meristems organization. Involved in the maintenance of adaxial/abaxial axis information in developing leaves, probably by regulating cell proliferation and expansion. Does not need calcium ions to be active. The chain is Calpain-type cysteine protease DEK1 (DEK1) from Zea mays (Maize).